The chain runs to 101 residues: Small ribosomal subunit protein uS14 (101 aa).

Belongs to the universal ribosomal protein uS14 family. As to quaternary structure, part of the 30S ribosomal subunit. Contacts proteins S3 and S10.

Functionally, binds 16S rRNA, required for the assembly of 30S particles and may also be responsible for determining the conformation of the 16S rRNA at the A site. This is Small ribosomal subunit protein uS14 from Corynebacterium efficiens (strain DSM 44549 / YS-314 / AJ 12310 / JCM 11189 / NBRC 100395).